Here is a 146-residue protein sequence, read N- to C-terminus: Dihydroneopterin aldolase 1 (146 aa).

Residues E41, Y73, and L92–E93 contribute to the substrate site. Residue K119 is the Proton donor/acceptor of the active site.

The protein belongs to the DHNA family. In terms of assembly, homooctamer. Forms a hollow cylinder assembled from two ring-shaped tetramers. Expressed in roots, leaves, stems and siliques.

The enzyme catalyses 7,8-dihydroneopterin = 6-hydroxymethyl-7,8-dihydropterin + glycolaldehyde. The protein operates within cofactor biosynthesis; tetrahydrofolate biosynthesis; 2-amino-4-hydroxy-6-hydroxymethyl-7,8-dihydropteridine diphosphate from 7,8-dihydroneopterin triphosphate: step 3/4. Its function is as follows. Catalyzes the conversion of 7,8-dihydroneopterin into 6-hydroxymethyl-7,8-dihydropterin, a biosynthetic precursor of the vitamin tetrahydrofolate. Can use L-threo-dihydroneopterin and D-erythro-dihydroneopterin as substrates for the formation of 6-hydroxymethyldihydropterin, but it can also catalyze the epimerization of carbon 2' of dihydroneopterin and dihydromonapterin. This is Dihydroneopterin aldolase 1 from Arabidopsis thaliana (Mouse-ear cress).